Consider the following 78-residue polypeptide: Acyl carrier protein (78 aa).

In terms of domain architecture, Carrier spans 2–77 (STIEERVKKI…AAIDYIEAAN (76 aa)). At Ser-37 the chain carries O-(pantetheine 4'-phosphoryl)serine.

Belongs to the acyl carrier protein (ACP) family. In terms of processing, 4'-phosphopantetheine is transferred from CoA to a specific serine of apo-ACP by AcpS. This modification is essential for activity because fatty acids are bound in thioester linkage to the sulfhydryl of the prosthetic group.

It localises to the cytoplasm. It functions in the pathway lipid metabolism; fatty acid biosynthesis. Functionally, carrier of the growing fatty acid chain in fatty acid biosynthesis. The chain is Acyl carrier protein from Edwardsiella ictaluri (strain 93-146).